A 340-amino-acid chain; its full sequence is DNA repair protein RAD51 homolog A (340 aa).

A compositionally biased stretch (low complexity) spans 1–14; it reads MSSAAQQQQKAAAA. The interval 1-21 is disordered; that stretch reads MSSAAQQQQKAAAAEQEEVEH. The HhH domain maps to 49 to 78; that stretch reads TVEAVAYTPRKDLLQIKGISEAKADKIIEA. 128-135 serves as a coordination point for ATP; that stretch reads GEFRSGKT.

It belongs to the RecA family. RAD51 subfamily. As to quaternary structure, self-associates and may interact with XRCC3 homolog. As to expression, highly expressed in mitotic and meiotic tissues, but low levels in differentiated tissues.

Its subcellular location is the nucleus. Its function is as follows. Binds to single and double-stranded DNA and exhibits DNA-dependent ATPase activity. Unwinds duplex DNA. Component of the meiotic recombination pathway. Seems to play a role in mediating chromosome homology search, chromosome pairing and synapsis at early stages and probably chromosome crossing-over at later stages in meiosis. Probably is involved in the repair of meiotic double strand breaks (DBSs) and in homologous recombination. This chain is DNA repair protein RAD51 homolog A (RAD51A), found in Zea mays (Maize).